The chain runs to 699 residues: DNA ligase (699 aa).

The interval 1-29 is disordered; it reads MSDADVDAESNPYLRDPPTEFEPAESLSR. Residues 60–64, 108–109, and Glu137 each bind NAD(+); these read DAAYD and SI. Lys139 functions as the N6-AMP-lysine intermediate in the catalytic mechanism. Arg160, Glu196, Lys311, and Lys335 together coordinate NAD(+). Zn(2+) is bound by residues Cys425, Cys428, Cys441, and Cys447. The 54-residue stretch at 613–666 folds into the BRCT domain; the sequence is SGGDELDGLTFVVTGTLAASRSDVTELVESHGGNVTGSVSGNTDYLVVGENPGR.

The protein belongs to the NAD-dependent DNA ligase family. LigA subfamily. Mg(2+) serves as cofactor. The cofactor is Mn(2+).

The catalysed reaction is NAD(+) + (deoxyribonucleotide)n-3'-hydroxyl + 5'-phospho-(deoxyribonucleotide)m = (deoxyribonucleotide)n+m + AMP + beta-nicotinamide D-nucleotide.. Displays maximal in vitro activity at high salt levels. Its function is as follows. DNA ligase that catalyzes the formation of phosphodiester linkages between 5'-phosphoryl and 3'-hydroxyl groups in double-stranded DNA using NAD as a coenzyme and as the energy source for the reaction. It is essential for DNA replication and repair of damaged DNA. This chain is DNA ligase, found in Haloferax volcanii (strain ATCC 29605 / DSM 3757 / JCM 8879 / NBRC 14742 / NCIMB 2012 / VKM B-1768 / DS2) (Halobacterium volcanii).